Consider the following 124-residue polypeptide: Holo-[acyl-carrier-protein] synthase (124 aa).

Mg(2+)-binding residues include aspartate 7 and glutamate 55.

The protein belongs to the P-Pant transferase superfamily. AcpS family. It depends on Mg(2+) as a cofactor.

Its subcellular location is the cytoplasm. It catalyses the reaction apo-[ACP] + CoA = holo-[ACP] + adenosine 3',5'-bisphosphate + H(+). In terms of biological role, transfers the 4'-phosphopantetheine moiety from coenzyme A to a Ser of acyl-carrier-protein. This Borreliella burgdorferi (strain ATCC 35210 / DSM 4680 / CIP 102532 / B31) (Borrelia burgdorferi) protein is Holo-[acyl-carrier-protein] synthase.